Reading from the N-terminus, the 414-residue chain is CinA-like protein (414 aa).

Belongs to the CinA family.

The chain is CinA-like protein from Citrifermentans bemidjiense (strain ATCC BAA-1014 / DSM 16622 / JCM 12645 / Bem) (Geobacter bemidjiensis).